Here is a 305-residue protein sequence, read N- to C-terminus: Putative S-adenosyl-L-methionine-dependent methyltransferase MAB_3787 (305 aa).

S-adenosyl-L-methionine contacts are provided by residues Asp-132 and Asp-161–Leu-162.

The protein belongs to the UPF0677 family.

Exhibits S-adenosyl-L-methionine-dependent methyltransferase activity. The sequence is that of Putative S-adenosyl-L-methionine-dependent methyltransferase MAB_3787 from Mycobacteroides abscessus (strain ATCC 19977 / DSM 44196 / CCUG 20993 / CIP 104536 / JCM 13569 / NCTC 13031 / TMC 1543 / L948) (Mycobacterium abscessus).